Here is a 1398-residue protein sequence, read N- to C-terminus: DNA-directed RNA polymerase subunit beta' (1398 aa).

4 residues coordinate Zn(2+): cysteine 70, cysteine 72, cysteine 85, and cysteine 88. The Mg(2+) site is built by aspartate 460, aspartate 462, and aspartate 464. Residues cysteine 814, cysteine 888, cysteine 895, and cysteine 898 each contribute to the Zn(2+) site.

This sequence belongs to the RNA polymerase beta' chain family. As to quaternary structure, the RNAP catalytic core consists of 2 alpha, 1 beta, 1 beta' and 1 omega subunit. When a sigma factor is associated with the core the holoenzyme is formed, which can initiate transcription. It depends on Mg(2+) as a cofactor. Requires Zn(2+) as cofactor.

It catalyses the reaction RNA(n) + a ribonucleoside 5'-triphosphate = RNA(n+1) + diphosphate. Its function is as follows. DNA-dependent RNA polymerase catalyzes the transcription of DNA into RNA using the four ribonucleoside triphosphates as substrates. This Pseudomonas putida (Arthrobacter siderocapsulatus) protein is DNA-directed RNA polymerase subunit beta'.